Consider the following 334-residue polypeptide: Aspartate carbamoyltransferase catalytic subunit (334 aa).

The carbamoyl phosphate site is built by arginine 71 and threonine 72. Lysine 99 provides a ligand contact to L-aspartate. The carbamoyl phosphate site is built by arginine 121, histidine 151, and glutamine 154. Positions 184 and 239 each coordinate L-aspartate. Residues glycine 280 and proline 281 each coordinate carbamoyl phosphate.

The protein belongs to the aspartate/ornithine carbamoyltransferase superfamily. ATCase family. In terms of assembly, heterododecamer (2C3:3R2) of six catalytic PyrB chains organized as two trimers (C3), and six regulatory PyrI chains organized as three dimers (R2).

The enzyme catalyses carbamoyl phosphate + L-aspartate = N-carbamoyl-L-aspartate + phosphate + H(+). The protein operates within pyrimidine metabolism; UMP biosynthesis via de novo pathway; (S)-dihydroorotate from bicarbonate: step 2/3. In terms of biological role, catalyzes the condensation of carbamoyl phosphate and aspartate to form carbamoyl aspartate and inorganic phosphate, the committed step in the de novo pyrimidine nucleotide biosynthesis pathway. This is Aspartate carbamoyltransferase catalytic subunit from Pseudomonas syringae pv. tomato (strain ATCC BAA-871 / DC3000).